The sequence spans 536 residues: Suppressor of cytokine signaling 5 (536 aa).

The interval 1 to 50 (MDKVGKMWNNFKYRCQNLFGHEGGSRSENVDMNSNRCLSVKEKNISIGDS) is required for interaction with IL4R. The disordered stretch occupies residues 115–175 (SRHAPWGGKK…SVSSRTVGSR (61 aa)). Residues 158–169 (VSSVHDMDSVSS) are compositionally biased toward low complexity. The region spanning 381 to 476 (CYWGVMDRYE…FFEPLLTISL (96 aa)) is the SH2 domain. Residues 471-520 (LLTISLNRTFPFSLQYICRAVICRCTTYDGIDGLPLPSMLQDFLKEYHYK) form the SOCS box domain.

In terms of assembly, interacts with IL4R; inhibits IL4 signaling. Interacts with EGFR. Interacts with ELOB and ELOC; mediates EGFR ubiquitination and degradation. In terms of processing, phosphorylated. Phosphorylation is induced by EGF.

It participates in protein modification; protein ubiquitination. Functionally, SOCS family proteins form part of a classical negative feedback system that regulates cytokine signal transduction. May be a substrate-recognition component of a SCF-like ECS (Elongin BC-CUL2/5-SOCS-box protein) E3 ubiquitin-protein ligase complex which mediates the ubiquitination and subsequent proteasomal degradation of target proteins. Inhibits for instance EGF signaling by mediating the degradation of the EGF receptor/EGFR. Involved in the regulation of T-helper cell differentiation by inhibiting of the IL4 signaling pathway which promotes differentiation into the Th2 phenotype. Can also partially inhibit IL6 and LIF signaling. The sequence is that of Suppressor of cytokine signaling 5 (SOCS5) from Homo sapiens (Human).